The following is a 253-amino-acid chain: MPEPTQKPAKEPVRAPIKEHFQLRETIVTIAADDPAHIEAAKEAIRVHRATLETYILADPYFQFTLEPYECPENAPEVVRRMVKAGNTMGIGPMSAVAGTISALAVEAMVKAGAKYAIVDNGGDIALINDRSVVVGIYAGQSPIKNLGLIFEPRDSITGVCTSAGTVGPSISFGMADAAAIFSDDVSLADAAATALGNEVGIGKEAVEVAFKVVKTVQGIKGALVIQGEYIGMWGKVPKITRAEVRHEYITKA.

Belongs to the UPF0280 family.

The protein is UPF0280 protein MA_1715 of Methanosarcina acetivorans (strain ATCC 35395 / DSM 2834 / JCM 12185 / C2A).